The chain runs to 201 residues: Small ribosomal subunit protein uS4 (201 aa).

The region spanning serine 91–glutamate 155 is the S4 RNA-binding domain.

This sequence belongs to the universal ribosomal protein uS4 family. In terms of assembly, part of the 30S ribosomal subunit. Contacts protein S5. The interaction surface between S4 and S5 is involved in control of translational fidelity.

Its function is as follows. One of the primary rRNA binding proteins, it binds directly to 16S rRNA where it nucleates assembly of the body of the 30S subunit. In terms of biological role, with S5 and S12 plays an important role in translational accuracy. This is Small ribosomal subunit protein uS4 from Rhodococcus jostii (strain RHA1).